A 548-amino-acid chain; its full sequence is Natural resistance-associated macrophage protein 1 (548 aa).

A disordered region spans residues 1–38 (MSGDTGPPKQGGTRYGSISSPPSPEPQQAPPGGTYLSE). Topologically, residues 1 to 55 (MSGDTGPPKQGGTRYGSISSPPSPEPQQAPPGGTYLSEKIPIPDTESGTFSLRKL) are cytoplasmic. The helical transmembrane segment at 56–73 (WAFTGPGFLMSIAFLDPG) threads the bilayer. Topologically, residues 74-82 (NIESDLQAG) are extracellular. Residues 83–102 (AVAGFKLLWVLLWATVLGLL) traverse the membrane as a helical segment. The Cytoplasmic segment spans residues 103-139 (CQRLAARLGVVTGKDLGEVCHLYYPKVPRILLWLTIE). A helical membrane pass occupies residues 140–160 (LAIVGSDMQEVIGTAIAFSLL). The Extracellular segment spans residues 161-164 (SAGR). Residues 165–184 (IPLWGGVLITIVDAFFFLFL) form a helical membrane-spanning segment. Residues 185–193 (DNYGLRKLE) lie on the Cytoplasmic side of the membrane. Residues 194 to 214 (AFFGFLITIMALTFGYEYVVA) form a helical membrane-spanning segment. The Extracellular portion of the chain corresponds to 215-237 (QPAQGALLQGLFLPSCPGCGQPE). Residues 238 to 256 (LLQAVGIIGAIIMPHNIYL) traverse the membrane as a helical segment. Residues 257 to 284 (HSSLVKSREVDRSRRADIREANMYFLIE) lie on the Cytoplasmic side of the membrane. Residues 285–304 (ATIALSVSFLINLFVMAVFG) form a helical membrane-spanning segment. At 305–346 (QAFYKQTNQAAFNICANSSLQDYAPIFPRNNLTVAVDIYQGG) the chain is on the extracellular side. Residues Asn-321 and Asn-335 are each glycosylated (N-linked (GlcNAc...) asparagine). A helical transmembrane segment spans residues 347 to 366 (VILGCLFGPAALYIWAVGLL). The Cytoplasmic segment spans residues 367 to 397 (AAGQSSTMTGTYAGQFVMEGFLKLRWSRFAR). Residues 398–415 (VLLTRSCAILPTVLLAVF) form a helical membrane-spanning segment. Topologically, residues 416–426 (RDLRDLSGLND) are extracellular. The chain crosses the membrane as a helical span at residues 427–447 (LLNVLQSLLLPFAVLPILTFT). The Cytoplasmic segment spans residues 448-463 (SMPALMREFANGLVSK). The chain crosses the membrane as a helical span at residues 464–485 (VITSSIMVLVCAVNLYFVISYV). Over 486 to 493 (PSLPHPAY) the chain is Extracellular. A helical transmembrane segment spans residues 494 to 513 (FSLVALLAAAYLGLTTYLVW). The Cytoplasmic segment spans residues 514 to 548 (TCLITQGATLLAHSSHQRFLYGLPEEDQEKGRTSG).

It belongs to the NRAMP family.

It localises to the late endosome membrane. It is found in the lysosome membrane. The catalysed reaction is Zn(2+)(in) + H(+)(out) = Zn(2+)(out) + H(+)(in). It catalyses the reaction Fe(2+)(in) + H(+)(out) = Fe(2+)(out) + H(+)(in). It carries out the reaction Mn(2+)(in) + H(+)(out) = Mn(2+)(out) + H(+)(in). Functionally, macrophage-specific antiporter that fluxes metal ions in either direction against a proton gradient. Localized to late endosomal lysosomal membranes, delivers bivalent cations from the cytosol into these acidic compartments where they may directly affect antimicrobial activity. Involved in iron metabolism and host natural resistance to infection with intracellular parasites. Pathogen resistance involves sequestration of Fe(2+) and Mn(2+), cofactors of both prokaryotic and eukaryotic catalases and superoxide dismutases, not only to protect the macrophage against its own generation of reactive oxygen species, but to deny the cations to the pathogen for synthesis of its protective enzymes. This chain is Natural resistance-associated macrophage protein 1 (SLC11A1), found in Bison bison (American bison).